The following is a 421-amino-acid chain: Mitochondrial distribution and morphology protein 10 (421 aa).

Belongs to the MDM10 family. In terms of assembly, component of the ER-mitochondria encounter structure (ERMES) or MDM complex, composed of MMM1, MDM10, MDM12 and MDM34. Associates with the mitochondrial outer membrane sorting assembly machinery SAM(core) complex.

The protein localises to the mitochondrion outer membrane. Its function is as follows. Component of the ERMES/MDM complex, which serves as a molecular tether to connect the endoplasmic reticulum and mitochondria. Components of this complex are involved in the control of mitochondrial shape and protein biogenesis and may function in phospholipid exchange. MDM10 is involved in the late assembly steps of the general translocase of the mitochondrial outer membrane (TOM complex). Functions in the TOM40-specific route of the assembly of outer membrane beta-barrel proteins, including the association of TOM40 with the receptor TOM22 and small TOM proteins. Can associate with the SAM(core) complex as well as the MDM12-MMM1 complex, both involved in late steps of the major beta-barrel assembly pathway, that is responsible for biogenesis of all outer membrane beta-barrel proteins. May act as a switch that shuttles between both complexes and channels precursor proteins into the TOM40-specific pathway. Plays a role in mitochondrial morphology and in the inheritance of mitochondria. This Vanderwaltozyma polyspora (strain ATCC 22028 / DSM 70294 / BCRC 21397 / CBS 2163 / NBRC 10782 / NRRL Y-8283 / UCD 57-17) (Kluyveromyces polysporus) protein is Mitochondrial distribution and morphology protein 10.